The following is a 31-amino-acid chain: Branched-chain-amino-acid aminotransferase, mitochondrial (31 aa).

The transit peptide at 1–27 (MAAAALRQIWARKFLPVPWLLCGPRRY) directs the protein to the mitochondrion.

This sequence belongs to the class-IV pyridoxal-phosphate-dependent aminotransferase family. In terms of assembly, homodimer. It depends on pyridoxal 5'-phosphate as a cofactor.

The protein resides in the mitochondrion. The catalysed reaction is L-leucine + 2-oxoglutarate = 4-methyl-2-oxopentanoate + L-glutamate. The enzyme catalyses L-isoleucine + 2-oxoglutarate = (S)-3-methyl-2-oxopentanoate + L-glutamate. It carries out the reaction L-valine + 2-oxoglutarate = 3-methyl-2-oxobutanoate + L-glutamate. Catalyzes the first reaction in the catabolism of the essential branched chain amino acids leucine, isoleucine, and valine. May also function as a transporter of branched chain alpha-keto acids. This Sus scrofa (Pig) protein is Branched-chain-amino-acid aminotransferase, mitochondrial (BCAT2).